Reading from the N-terminus, the 385-residue chain is 8-amino-7-oxononanoate synthase (385 aa).

Arg21 is a binding site for substrate. 108–109 provides a ligand contact to pyridoxal 5'-phosphate; sequence GF. His133 contributes to the substrate binding site. Pyridoxal 5'-phosphate is bound by residues Ser179, His207, and Thr233. Lys236 carries the N6-(pyridoxal phosphate)lysine modification. A substrate-binding site is contributed by Thr352.

This sequence belongs to the class-II pyridoxal-phosphate-dependent aminotransferase family. BioF subfamily. In terms of assembly, homodimer. Requires pyridoxal 5'-phosphate as cofactor.

The enzyme catalyses 6-carboxyhexanoyl-[ACP] + L-alanine + H(+) = (8S)-8-amino-7-oxononanoate + holo-[ACP] + CO2. It participates in cofactor biosynthesis; biotin biosynthesis. Catalyzes the decarboxylative condensation of pimeloyl-[acyl-carrier protein] and L-alanine to produce 8-amino-7-oxononanoate (AON), [acyl-carrier protein], and carbon dioxide. The polypeptide is 8-amino-7-oxononanoate synthase (Klebsiella pneumoniae subsp. pneumoniae (strain ATCC 700721 / MGH 78578)).